The primary structure comprises 280 residues: Bis(5'-nucleosyl)-tetraphosphatase, symmetrical (280 aa).

It belongs to the Ap4A hydrolase family.

The catalysed reaction is P(1),P(4)-bis(5'-adenosyl) tetraphosphate + H2O = 2 ADP + 2 H(+). Hydrolyzes diadenosine 5',5'''-P1,P4-tetraphosphate to yield ADP. This is Bis(5'-nucleosyl)-tetraphosphatase, symmetrical from Paracidovorax citrulli (strain AAC00-1) (Acidovorax citrulli).